The primary structure comprises 5263 residues: MRVKTFVILCCALQYVAYTNANINDFDEDYFGSDVTVQSSNTTDEIIRDASGAVIEEQITTKKMQRKNKNHGILGKNEKMIKTFVITTDSDGNESIVEEDVLMKTLSDGTVAQSYVAADAGAYSQSGPYVSNSGYSTHQGYTSDFSTSAAVGAGAGAGAAAGSGAGAGAGYGAASGAGAGAGAGAGAGYGTGAGAGAGAGYGAGAGAGAGAGYGAGAGAGAGAGYGAGAGAGAGAGYGAGAGAGAGAGYGAGAGAGAGAGYGAASGAGAGAGYGQGVGSGAASGAGAGAGAGSAAGSGAGAGAGTGAGAGYGAGAGAGAGAGYGAASGTGAGYGAGAGAGYGGASGAGAGAGAGAGAGAGAGYGTGAGYGAGAGAGAGAGAGAGYGAGAGAGYGAGYGVGAGAGYGAGYGAGAGSGAASGAGSGAGAGSGAGAGSGAGAGSGAGAGSGAGAGSGAGAGSGAGAGSGAGAGSGTGAGSGAGAGYGAGAGAGYGAGAGSGAASGAGAGSGAGAGSGAGAGSGAGAGSGAGAGSGAGAGYGAGAGAGYGAGAGAGYGAGAGVGYGAGAGSGAASGAGAGSGAGAGSGAGAGSGAGAGSGAGAGSGAGAGSGAGAGSGAGAGSGAGAGSGAGVGYGAGVGAGYGAGYGAGAGAGYGAGAGSGAASGAGAGAGAGAGTGSSGFGPYVANGGYSRSDGYEYAWSSDFGTGSGAGAGSGAGAGSGAGAGSGAGAGSGAGAGSGAGAGYGAGVGVGYGAGYGAGAGAGYGAGAGSGAASGAGAGSGAGAGSGAGAGSGAGAGSGAGAGSGAGAGSGAGAGSGAGAGSGAGAGSGAGAGSGAGVGSGAGAGSGAGAGVGYGAGAGVGYGAGAGSGAASGAGAGSGAGAGSGAGAGSGAGAGSGAGAGSGAGAGSGAGAGSGAGAGSGAGAGSGAGVGYGAGVGAGYGAGYGAGAGAGYGAGAGSGAASGAGAGSGAGAGSGAGAGSGAGAGSGAGAGSGAGAGSGAGAGSGAGAGSGAGAGSGAGAGSGAGAGSGAGAGYGAGAGAGYGAGYGAGAGAGYGAGAGSGAASGAGSGAGAGSGAGAGAGSGAGAGSGAGAGSGAGAGSGAGAGSGAGAGSGAGAGYGAGVGAGYGAGYGAGAGAGYGAGAGSGAASGAGAGSGAGAGSGAGAGSGAGAGSGAGAGSGAGAGSGAGAGSGAGVGYGAGYGAGAGAGYGAGAGSGAASGAGAGAGAGAGTGSSGFGPYVAHGGYSGYEYAWSSESDFGTGSGAGAGSGAGAGSGAGAGSGAGAGSGAGYGAGVGAGYGAGYGAGAGAGYGAGAGSGAGSGAGAGSGAGAGSGAGAGSGAGAGSGAGAGSGAGAGSGAGAGSGAGAGSGAGAGYGAGYGAGAGAGYGAGAGSGAGSGAGAGSGAGAGSGAGAGSGAGAGSGAGAGSGAGAGSGAGAGSGAGAGYGAGVGAGYGAGYGAGAGAGYGAGAGSGAGSGAGAGSGAGAGSGAGAGSGAGVGSGAGAGSGAGAGSGAGAGSGAGAGYGAGYGAGAGAGYGAGAGSGAGSGAGAGSGAGAGSGAGAGSGAGAGSGAGAGSGAGAGSGAGAGSGAGVGYGAGVGAGYGAGYGAGAGAGYGAGAGSGAASGAGAGAGAGAGTGSSGFGPYVANGGYSGYEYAWSSESDFGTGSGAGAGSGAGAGSGAGAGSGAGAGSGAGAGYGAGYGAGAGAGYGAGAGSGAGSGAGAGSGAGAGSGAGAGSGAGAGSGAGAGSGAGAGSGAGAGSGAGSGSGAGAGSGAGAGSGAGAGYGAGVGAGYGVGYGAGAGAGYGAGAGSGAASGAGAGAGAGAGTGSSGFGPYVAHGGYSGYEYAWSSESDFGTGSGAGAGSGAGAGSGAGAGSGAGAGSGAGAGSGAGAGSGAGAGYGAGVGAGYGAAYGAGAGAGYGAGAGSGAASGAGAGSGAGAGSGAGAGSGAGAGSGAGAGSGAGAGSGAGAGSGAGAGSGAGAGSGAGAGSGAGAGYGAGAGAGYGAGAGSGAGSGAGAGSGAGAGSGAGAGSGAGAGSGAGAGSGAGSGSGAGAGSGAGAGSGAGAGYGAGVGAGYGAGYGAGAGAGYGAGAGSGAGSGAGAGSGAGAGYGAGAGAGYGAGYGAGAGAGYGAGAGTGAGSGAGAGSGAGAGSGAGAGSGAGAGSGAGAGSGAGAGSGAGSGSGAGAGSGAGAGSGAGAGSGAGAGSGAGAGSGAGAGYGAGAGAGYGAGYGAGAGAGYGAGAGSGAGSGAGAGSGAGAGSGAGAGSGAGAGYGAGYGAGAGSGAASGAGAGAGAGAGTGSSGFGPYVAHGGYSGYEYAWSSESDFGTGSGAGAGSGAGAGAGAGAGSGAGAGYGAGVGAGYGAGYGAGAGAGYGAGAGSGTGSGAGAGSGAGAGYGAGVGAGYGAGAGSGAAFGAGAGAGAGSGAGAGSGAGAGSGAGAGSGAGAGSGAGAGYGAGYGAGVGAGYGAGAGSGAASGAGAGSGAGAGSGAGAGSGAGAGSGAGAGSGAGAGYGAGVGAGYGAGYGAGAGAGYGAGAGSGAASGAGAGSGAGAGAGSGAGAGSGAGAGSGAGAGSGAGSGAGAGSGAGAGSGAGAGYGAGAGSGAASGAGAGAGAGAGTGSSGFGPYVANGGYSGYEYAWSSESDFGTGSGAGAGSGAGAGSGAGAGSGAGAGSGAGAGYGAGVGAGYGAGYGAGAGAGYGAGAGSGAGSGAGAGSGAGAGSGAGAGSGAGAGSGAGAGSGAGAGSGAGAGYGAGAGSGAASGAGAGSGAGAGSGAGAGSGAGAGSGAGAGSGAGAGSGAGAGYGAGVGAGYGVGYGAGAGAGYGAGAGSGAGSGAGAGSGAGAGSGAGAGSGAGAGSGAGSGAGAGSGAGAGSGAGAGSGAGSGAGAGSGAGAGYGVGYGAGAGAGYGAGAGSGAGSGAGAGSGAGAGSGAGAGSGAGSGAGAGSGAGAGSGAGAGSGAGAGYGAGVGAGYGVGYGAGAGAGYGAGAGSGAGSGAGAGSGAGAGSGAGAGSGAGAGSGAGAGSGAGAGSGAGAGSGAGSGAGAGSGAGAGSGAGAGSGAGAGSGAGSGAGAGSGAGAGSGAGAGSGAGAGYGAGVGAGYGVGYGAGVGAGYGAGAGSGAASGAGAGSGAGAGAGSGAGAGSGAGAGSGAGAGSGAGAGSGAGAGSGAGAGYGAGYGAGVGAGYGAGAGVGYGAGAGAGYGAGAGSGAASGAGAGAGSGAGAGTGAGAGSGAGAGYGAGAGSGAASGAGAGAGAGAGTGSSGFGPYVANGGYSGYEYAWSSESDFGTGSGAGAGSGAGAGSGAGAGSGAGAGSGAGAGYGAGVGAGYGAGAGSGAGSGAGAGSGAGAGSGAGAGSGAGAGSGAGAGYGAGAGSGTGSGAGAGSGAGAGSGAGAGSGAGAGSGAGAGSGAGAGSGVGAGYGVGYGAGAGAGYGVGYGAGAGAGYGAGAGSGTGSGAGAGSGAGAGSGAGAGSGAGAGSGAGAGSGAGAGSGAGAGYGAGVGAGYGVGYGAGAGAGYGAGAGSGAGSGAGAGSGAGAGSGAGAGSGAGAGSGAGSGAGAGSGAGAGSGAGAGSGAGSGAGAGSGAGAGYGVGYGAGAGAGYGAGAGSGAGSGAGAGSGAGAGSGAGAGSGAGSGAGAGSGAGAGSGAGAGSGAGAGYGAGVGAGYGVGYGAGAGAGYGAGAGSGAGSGAGAGSGAGAGSGAGAGSGAGAGSGAGAGSGAGAGSGAGAGSGAGSGAGAGSGAGAGSGAGAGSGAGAGYGAGVGAGYGVGYGAGAGAGYGAGAGSGAASGAGAGAGAGAGTGSSGFGPYVANGGYSGYEYAWSSESDFGTGSGAGAGSGAGAGSGAGAGYGAGYGAGVGAGYGAGAGVGYGAGAGAGYGAGAGSGAASGAGAGAGAGAGSGAGAGSGAGAGAGSGAGAGYGAGYGIGVGAGYGAGAGVGYGAGAGAGYGAGAGSGAASGAGAGSGAGAGSGAGAGSGAGAGSGAGAGSGAGAGSGAGAGYGAGYGAGVGAGYGAGAGVGYGAGAGAGYGAGAGSGAASGAGAGAGAGAGAGSGAGAGSGAGAGSGAGAGSGAGAGSGAGAGSGAGAGSGAGAGSGAGAGSGAGAGYGAGVGAGYGAGYGGAGAGYGAGAGSGAASGAGAGSGAGAGSGAGAGSGAGAGSGAGAGSGAGAGYGAGAGSGAASGAGAGAGAGAGTGSSGFGPYVNGGYSGYEYAWSSESDFGTGSGAGAGSGAGAGSGAGAGYGAGVGAGYGAGYGAGAGAGYGAGAGSGAASGAGAGSGAGAGSGAGAGSGAGAGSGAGSGAGAGSGAGAGSGAGAGSGAGAGSGAGAGSGAGAGYGAGVGAGYGAGYGAGAGAGYGAGAGSGAASGAGAGSGAGAGAGSGAGAGSGAGAGSGAGAGSGAGAGSGAGAGSGAGSGAGAGSGAGAGYGAGYGAGVGAGYGAGAGVGYGAGAGAGYGAGAGSGAASGAGAGSGSGAGSGAGAGSGAGAGSGAGAGAGSGAGAGSGAGAGSGAGAGYGAGYGAGAGSGAASGAGAGAGAGAGTGSSGFGPYVANGGYSGYEYAWSSESDFGTGSGAGAGSGAGAGSGAGAGYGAGVGAGYGAGYGAGAGAGYGAGAGSGAGSGAGAGSGAGAGSGAGAGSGAGAGSGAGAGSGAGAGSGAGAGSGAGAGYGAGYGAGAGAGYGAGAGVGYGAGAGAGYGAGAGSGAGSGAGAGSGSGAGAGSGSGAGSGAGAGSGAGAGSGAGAGSGAGAGSGAGAGSGAGAGSGAGAGYGAGYGIGVGAGYGAGAGVGYGAGAGAGYGAGAGSGAASGAGAGSGAGAGSGAGAGSGAGAGSGAGAGSGAGAGSGAGAGSGAGAGSGAGAGSGAGAGYGAGAGVGYGAGAGSGAASGAGAGSGAGAGSGAGAGSGAGAGSGAGAGSGAGAGSGAGAGSGAGSGAGAGSGAGAGYGAGYGAGVGAGYGAGAGYGAGYGVGAGAGYGAGAGSGAGSGAGAGSGAGAGSGAGAGSGAGAGSGAGAGSGAGSGAGAGYGAGAGAGYGAGAGAGYGAGAGSGAASGAGAGAGAGSGAGAGSGAGAGSGAGSGAGAGSGAGAGYGAGAGSGAASGAGAGSGAGAGAGAGAGAGSGAGAGSGAGAGYGAGAGSGAASGAGAGAGAGTGSSGFGPYVANGGYSRREGYEYAWSSKSDFETGSGAASGAGAGAGSGAGAGSGAGAGSGAGAGSGAGAGGSVSYGAGRGYGQGAGSAASSVSSASSRSYDYSRRNVRKNCGIPRRQLVVKFRALPCVNC.

An N-terminal signal peptide occupies residues 1-21 (MRVKTFVILCCALQYVAYTNA). Positions 149–5206 (AAVGAGAGAG…GSGAGAGGSV (5058 aa)) are highly repetitive. A disulfide bridge links Cys-5260 with Cys-5263.

Silk fibroin elementary unit consists in a disulfide-linked heavy and light chain and a p25 glycoprotein in molar ratios of 6:6:1. This results in a complex of approximately 2.3 MDa. The interchain disulfide bridge is essential for the intracellular transport and secretion of fibroin. As to expression, produced exclusively in the posterior (PSG) section of silk glands, which are essentially modified salivary glands.

Its function is as follows. Core component of the silk filament; a strong, insoluble and chemically inert fiber. The polypeptide is Fibroin heavy chain (FIBH) (Bombyx mori (Silk moth)).